Consider the following 337-residue polypeptide: uncharacterized protein (337 aa).

2 helical membrane-spanning segments follow: residues 241 to 261 (FTLL…GAFI) and 273 to 293 (ASLI…IGII).

The protein belongs to the glycosyltransferase 2 family.

The protein resides in the cell membrane. This is an uncharacterized protein from Bacillus subtilis (strain 168).